A 258-amino-acid polypeptide reads, in one-letter code: Global transcriptional regulator CodY (258 aa).

The tract at residues 1-156 (MSSLLDKTRM…SATIIGLEIL (156 aa)) is GAF domain. The H-T-H motif DNA-binding region spans 204-223 (ASKIADKVGITRSVIVNALR).

The protein belongs to the CodY family.

It is found in the cytoplasm. Functionally, DNA-binding global transcriptional regulator which is involved in the adaptive response to starvation and acts by directly or indirectly controlling the expression of numerous genes in response to nutrient availability. During rapid exponential growth, CodY is highly active and represses genes whose products allow adaptation to nutrient depletion. This chain is Global transcriptional regulator CodY, found in Clostridium botulinum (strain Okra / Type B1).